Consider the following 205-residue polypeptide: Methylthioribulose-1-phosphate dehydratase (205 aa).

Zn(2+) contacts are provided by H96 and H98.

It belongs to the aldolase class II family. MtnB subfamily. The cofactor is Zn(2+).

It carries out the reaction 5-(methylsulfanyl)-D-ribulose 1-phosphate = 5-methylsulfanyl-2,3-dioxopentyl phosphate + H2O. The protein operates within amino-acid biosynthesis; L-methionine biosynthesis via salvage pathway; L-methionine from S-methyl-5-thio-alpha-D-ribose 1-phosphate: step 2/6. Catalyzes the dehydration of methylthioribulose-1-phosphate (MTRu-1-P) into 2,3-diketo-5-methylthiopentyl-1-phosphate (DK-MTP-1-P). In Pseudomonas paraeruginosa (strain DSM 24068 / PA7) (Pseudomonas aeruginosa (strain PA7)), this protein is Methylthioribulose-1-phosphate dehydratase.